The sequence spans 195 residues: Small ribosomal subunit protein eS7 (195 aa).

2 positions are modified to phosphothreonine: threonine 146 and threonine 151. A phosphoserine mark is found at serine 172 and serine 173.

This sequence belongs to the eukaryotic ribosomal protein eS7 family. In terms of assembly, component of the small ribosomal subunit (SSU). Mature yeast ribosomes consist of a small (40S) and a large (60S) subunit. The 40S small subunit contains 1 molecule of ribosomal RNA (18S rRNA) and at least 33 different proteins. The large 60S subunit contains 3 rRNA molecules (25S, 5.8S and 5S rRNA) and at least 46 different proteins. Interacts with snoRNA U3. uS11 interacts with MPP10. Component of the ribosomal small subunit (SSU) processome composed of at least 40 protein subunits and snoRNA U3.

Its subcellular location is the cytoplasm. It localises to the nucleus. The protein resides in the nucleolus. Its function is as follows. Component of the ribosome, a large ribonucleoprotein complex responsible for the synthesis of proteins in the cell. The small ribosomal subunit (SSU) binds messenger RNAs (mRNAs) and translates the encoded message by selecting cognate aminoacyl-transfer RNA (tRNA) molecules. The large subunit (LSU) contains the ribosomal catalytic site termed the peptidyl transferase center (PTC), which catalyzes the formation of peptide bonds, thereby polymerizing the amino acids delivered by tRNAs into a polypeptide chain. The nascent polypeptides leave the ribosome through a tunnel in the LSU and interact with protein factors that function in enzymatic processing, targeting, and the membrane insertion of nascent chains at the exit of the ribosomal tunnel. eS7 is involved in nucleolar processing of pre-18S ribosomal RNA and ribosome assembly. The protein is Small ribosomal subunit protein eS7 (rps7) of Schizosaccharomyces pombe (strain 972 / ATCC 24843) (Fission yeast).